A 186-amino-acid polypeptide reads, in one-letter code: Adenylate kinase (186 aa).

An ATP-binding site is contributed by 14–19; the sequence is GAGKGT. The NMP stretch occupies residues 34-63; it reads STGDILRDHVARGTPLGERVRPIMERGDLV. Residues threonine 35, arginine 40, 61–63, 84–87, and glutamine 91 each bind AMP; these read DLV and GFPR. The LID stretch occupies residues 125–135; sequence RRAELEGRSDD. An ATP-binding site is contributed by arginine 126. Residues arginine 132 and arginine 143 each contribute to the AMP site. ATP is bound at residue glycine 171.

The protein belongs to the adenylate kinase family. Monomer.

It localises to the cytoplasm. It catalyses the reaction AMP + ATP = 2 ADP. The protein operates within purine metabolism; AMP biosynthesis via salvage pathway; AMP from ADP: step 1/1. In terms of biological role, catalyzes the reversible transfer of the terminal phosphate group between ATP and AMP. Plays an important role in cellular energy homeostasis and in adenine nucleotide metabolism. This is Adenylate kinase from Thermus thermophilus (strain ATCC BAA-163 / DSM 7039 / HB27).